A 354-amino-acid chain; its full sequence is S-adenosylmethionine:tRNA ribosyltransferase-isomerase (354 aa).

The protein belongs to the QueA family. As to quaternary structure, monomer.

It localises to the cytoplasm. The enzyme catalyses 7-aminomethyl-7-carbaguanosine(34) in tRNA + S-adenosyl-L-methionine = epoxyqueuosine(34) in tRNA + adenine + L-methionine + 2 H(+). The protein operates within tRNA modification; tRNA-queuosine biosynthesis. In terms of biological role, transfers and isomerizes the ribose moiety from AdoMet to the 7-aminomethyl group of 7-deazaguanine (preQ1-tRNA) to give epoxyqueuosine (oQ-tRNA). The protein is S-adenosylmethionine:tRNA ribosyltransferase-isomerase of Klebsiella pneumoniae (strain 342).